We begin with the raw amino-acid sequence, 491 residues long: Protein nucleotidyltransferase YdiU (491 aa).

Positions 92, 94, 95, 115, 127, 128, 178, and 185 each coordinate ATP. Residue Asp254 is the Proton acceptor of the active site. Mg(2+) contacts are provided by Asn255 and Asp264. Asp264 is an ATP binding site.

Belongs to the SELO family. The cofactor is Mg(2+). Mn(2+) is required as a cofactor.

It carries out the reaction L-seryl-[protein] + ATP = 3-O-(5'-adenylyl)-L-seryl-[protein] + diphosphate. It catalyses the reaction L-threonyl-[protein] + ATP = 3-O-(5'-adenylyl)-L-threonyl-[protein] + diphosphate. The enzyme catalyses L-tyrosyl-[protein] + ATP = O-(5'-adenylyl)-L-tyrosyl-[protein] + diphosphate. The catalysed reaction is L-histidyl-[protein] + UTP = N(tele)-(5'-uridylyl)-L-histidyl-[protein] + diphosphate. It carries out the reaction L-seryl-[protein] + UTP = O-(5'-uridylyl)-L-seryl-[protein] + diphosphate. It catalyses the reaction L-tyrosyl-[protein] + UTP = O-(5'-uridylyl)-L-tyrosyl-[protein] + diphosphate. Functionally, nucleotidyltransferase involved in the post-translational modification of proteins. It can catalyze the addition of adenosine monophosphate (AMP) or uridine monophosphate (UMP) to a protein, resulting in modifications known as AMPylation and UMPylation. The chain is Protein nucleotidyltransferase YdiU from Pseudarthrobacter chlorophenolicus (strain ATCC 700700 / DSM 12829 / CIP 107037 / JCM 12360 / KCTC 9906 / NCIMB 13794 / A6) (Arthrobacter chlorophenolicus).